Reading from the N-terminus, the 268-residue chain is Mediator of RNA polymerase II transcription subunit 8-A (268 aa).

2 coiled-coil regions span residues 1–26 and 117–160; these read MQRE…KNSL and VEEL…EERE. Residues 190–268 are disordered; the sequence is GLSNRRPPGQ…KSASMHPYQR (79 aa). Over residues 223–246 the composition is skewed to polar residues; that stretch reads VPMSLQSNQQQQHMAGVSMSQGNQ.

The protein belongs to the Mediator complex subunit 8 family. Component of the Mediator complex. May be part of a multisubunit E3 ubiquitin-protein ligase complex.

The protein resides in the nucleus. Its pathway is protein modification; protein ubiquitination. In terms of biological role, component of the Mediator complex, a coactivator involved in the regulated transcription of nearly all RNA polymerase II-dependent genes. Mediator functions as a bridge to convey information from gene-specific regulatory proteins to the basal RNA polymerase II transcription machinery. Mediator is recruited to promoters by direct interactions with regulatory proteins and serves as a scaffold for the assembly of a functional preinitiation complex with RNA polymerase II and the general transcription factors. May play a role as a target recruitment subunit in E3 ubiquitin-protein ligase complexes and thus in ubiquitination and subsequent proteasomal degradation of target proteins. In Xenopus laevis (African clawed frog), this protein is Mediator of RNA polymerase II transcription subunit 8-A (med8-a).